We begin with the raw amino-acid sequence, 499 residues long: Glutelin type-A 1 (499 aa).

Positions 1–24 (MASINRPIVFFTVCLFLLCNGSLA) are cleaved as a signal peptide. Disulfide bonds link Cys-46–Cys-79 and Cys-122–Cys-313. Cupin type-1 domains follow at residues 51-248 (LQAF…QVAR) and 319-468 (QNID…EEAQ).

It belongs to the 11S seed storage protein (globulins) family. Hexamer; each subunit is composed of an acidic and a basic chain derived from a single precursor and linked by a disulfide bond.

Its function is as follows. Seed storage protein. The polypeptide is Glutelin type-A 1 (GLUA1) (Oryza sativa subsp. japonica (Rice)).